Here is a 308-residue protein sequence, read N- to C-terminus: Ornithine carbamoyltransferase (308 aa).

Residues 57–60, Gln-84, Arg-108, and 135–138 contribute to the carbamoyl phosphate site; these read STRT and HPCQ. Residues Asn-166, Asp-224, and 228–229 each bind L-ornithine; that span reads SM. Carbamoyl phosphate is bound by residues 264–265 and Arg-292; that span reads CL.

Belongs to the aspartate/ornithine carbamoyltransferase superfamily. OTCase family.

The protein localises to the cytoplasm. The enzyme catalyses carbamoyl phosphate + L-ornithine = L-citrulline + phosphate + H(+). It participates in amino-acid degradation; L-arginine degradation via ADI pathway; carbamoyl phosphate from L-arginine: step 2/2. In terms of biological role, reversibly catalyzes the transfer of the carbamoyl group from carbamoyl phosphate (CP) to the N(epsilon) atom of ornithine (ORN) to produce L-citrulline. This is Ornithine carbamoyltransferase from Ralstonia pickettii (strain 12J).